The sequence spans 1182 residues: Lysine-specific demethylase hairless (1182 aa).

Disordered regions lie at residues leucine 227–arginine 257, tyrosine 302–tryptophan 380, alanine 411–tryptophan 443, and threonine 507–asparagine 546. Residues proline 307 to proline 321 show a composition bias toward pro residues. Positions leucine 561–leucine 565 match the LXXLL motif 1 motif. A C6-type zinc finger spans residues cysteine 595–cysteine 620. A disordered region spans residues glycine 697–serine 746. Residues asparagine 722 to threonine 731 are compositionally biased toward basic and acidic residues. The short motif at leucine 753–leucine 757 is the LXXLL motif 2 element. One can recognise a JmjC domain in the interval aspartate 939–alanine 1150. Fe cation is bound by residues cysteine 1000, glutamate 1002, and histidine 1118.

Fe(2+) is required as a cofactor. Expressed predominantly in brain, hair follicles and interfollicular epidermis. No expression in dermis.

The protein localises to the nucleus. It catalyses the reaction N(6),N(6)-dimethyl-L-lysyl(9)-[histone H3] + 2 2-oxoglutarate + 2 O2 = L-lysyl(9)-[histone H3] + 2 formaldehyde + 2 succinate + 2 CO2. In terms of biological role, histone demethylase that specifically demethylates both mono- and dimethylated 'Lys-9' of histone H3. May act as a transcription regulator controlling hair biology (via targeting of collagens), neural activity, and cell cycle. This Mus musculus (Mouse) protein is Lysine-specific demethylase hairless (Hr).